The chain runs to 185 residues: piRNA-mediated silencing protein C19orf84 homolog (185 aa).

Disordered regions lie at residues 1-38 (MDEL…PSLL) and 93-185 (HIWP…EADY). Residues 11 to 25 (NGDNLSLPSAGTESW) are compositionally biased toward polar residues. Residues 26–38 (PTSATPGLPPSLL) show a composition bias toward low complexity. The span at 118–130 (RPSRGWGRGRGRG) shows a compositional bias: basic residues. Residues 139–150 (GPERAEERERNM) show a composition bias toward basic and acidic residues.

As to quaternary structure, interacts with SPOCD1.

It is found in the nucleus. Its subcellular location is the nucleoplasm. In terms of biological role, protein adapter involved in piRNA-directed transposon methylation by connecting PIWIL4-piRNA and DNA methylation machineries. The PIWIL4-piRNA pathway plays a central role during spermatogenesis by directing transposon DNA methylation and silencing, thereby preventing their mobilization, which is essential for the germline integrity. The polypeptide is piRNA-mediated silencing protein C19orf84 homolog (Mus musculus (Mouse)).